Consider the following 473-residue polypeptide: 6-phosphogluconate dehydrogenase, decarboxylating (473 aa).

NADP(+) contacts are provided by residues 10–15 (GMAVMG), 33–35 (NRT), 74–76 (VKS), and N102. Substrate contacts are provided by residues N102 and 128–130 (SGG). The active-site Proton acceptor is the K182. 185–186 (HN) contributes to the substrate binding site. Catalysis depends on E189, which acts as the Proton donor. Substrate contacts are provided by Y190, K260, R287, R446, and H452.

The protein belongs to the 6-phosphogluconate dehydrogenase family. Homodimer.

It carries out the reaction 6-phospho-D-gluconate + NADP(+) = D-ribulose 5-phosphate + CO2 + NADPH. It participates in carbohydrate degradation; pentose phosphate pathway; D-ribulose 5-phosphate from D-glucose 6-phosphate (oxidative stage): step 3/3. Catalyzes the oxidative decarboxylation of 6-phosphogluconate to ribulose 5-phosphate and CO(2), with concomitant reduction of NADP to NADPH. The sequence is that of 6-phosphogluconate dehydrogenase, decarboxylating (gnd) from Buchnera aphidicola subsp. Schizaphis graminum (strain Sg).